The following is a 63-amino-acid chain: Large ribosomal subunit protein bL32 (63 aa).

Positions Met-1–Ala-18 are enriched in basic residues. The interval Met-1–Pro-27 is disordered.

The protein belongs to the bacterial ribosomal protein bL32 family.

This chain is Large ribosomal subunit protein bL32, found in Chloroherpeton thalassium (strain ATCC 35110 / GB-78).